A 642-amino-acid chain; its full sequence is Zinc finger protein 398 (642 aa).

Disordered regions lie at residues 1–24 and 198–225; these read MAEA…QPLP and EGEH…PGIS. The KRAB domain occupies 143–214; it reads VAFDDVSIYF…DQAGPEESEI (72 aa). Residues 207–220 show a composition bias toward acidic residues; it reads AGPEESEIPTDPSE. Residue Lys-265 forms a Glycyl lysine isopeptide (Lys-Gly) (interchain with G-Cter in SUMO2) linkage. The C2H2-type 1; atypical zinc-finger motif lies at 343–364; that stretch reads FSCHHCGKNLSQDMLLTHQCSH. The C2H2-type 2; degenerate zinc finger occupies 370–392; sequence LPCAQCPKHFTPQADLSSTSQDH. 7 C2H2-type zinc fingers span residues 398–420, 427–449, 455–477, 483–505, 511–533, 539–561, and 567–590; these read PTCP…LRVH, FPCP…RRAH, FRCA…QRGH, FSCP…QMIH, YPCT…RRLH, FSCP…QRIH, and YPCS…RSGH. The disordered stretch occupies residues 587–615; that stretch reads RSGHNGGCGGDSDPSGQPPNPPGPLITGL.

Belongs to the krueppel C2H2-type zinc-finger protein family.

The protein resides in the nucleus. Its function is as follows. Functions as a transcriptional activator. The sequence is that of Zinc finger protein 398 (ZNF398) from Homo sapiens (Human).